A 24-amino-acid chain; its full sequence is REVCELNPDCDELADHIGFQEAYR.

One can recognise a Gla domain in the interval 1 to 24; that stretch reads REVCELNPDCDELADHIGFQEAYR. Ca(2+) contacts are provided by Glu2, Glu5, and Asp11. Residues Glu2 and Glu5 each carry the 4-carboxyglutamate modification. A disulfide bridge links Cys4 with Cys10.

Belongs to the osteocalcin/matrix Gla protein family. In terms of processing, gamma-carboxyglutamate residues are formed by vitamin K dependent carboxylation by GGCX. These residues are essential for the binding of calcium. Decarboxylation promotes the hormone activity.

Its subcellular location is the secreted. In terms of biological role, the carboxylated form is one of the main organic components of the bone matrix, which constitutes 1-2% of the total bone protein: it acts as a negative regulator of bone formation and is required to limit bone formation without impairing bone resorption or mineralization. The carboxylated form binds strongly to apatite and calcium. The uncarboxylated form acts as a hormone secreted by osteoblasts, which regulates different cellular processes, such as energy metabolism, male fertility and brain development. Regulates of energy metabolism by acting as a hormone favoring pancreatic beta-cell proliferation, insulin secretion and sensitivity and energy expenditure. Uncarboxylated osteocalcin hormone also promotes testosterone production in the testes: acts as a ligand for G protein-coupled receptor GPRC6A at the surface of Leydig cells, initiating a signaling response that promotes the expression of enzymes required for testosterone synthesis in a CREB-dependent manner. Also acts as a regulator of brain development: osteocalcin hormone crosses the blood-brain barrier and acts as a ligand for GPR158 on neurons, initiating a signaling response that prevents neuronal apoptosis in the hippocampus, favors the synthesis of all monoamine neurotransmitters and inhibits that of gamma-aminobutyric acid (GABA). Osteocalcin also crosses the placenta during pregnancy and maternal osteocalcin is required for fetal brain development. The protein is Osteocalcin of Homo sapiens neanderthalensis (Neanderthal).